The chain runs to 121 residues: Large ribosomal subunit protein uL14 (121 aa).

This sequence belongs to the universal ribosomal protein uL14 family. Part of the 50S ribosomal subunit. Forms a cluster with proteins L3 and L19. In the 70S ribosome, L14 and L19 interact and together make contacts with the 16S rRNA in bridges B5 and B8.

Functionally, binds to 23S rRNA. Forms part of two intersubunit bridges in the 70S ribosome. The protein is Large ribosomal subunit protein uL14 of Aquifex pyrophilus.